Consider the following 213-residue polypeptide: U1 small nuclear ribonucleoprotein C (213 aa).

The Matrin-type zinc finger occupies 4-36; that stretch reads YYCDYCDTYLTHDSPSVRKQHNAGYKHKANVRS. The span at 143-166 shows a compositional bias: pro residues; the sequence is APSMPMPPLNSLPRPPTMNVPPAV. The tract at residues 143-213 is disordered; sequence APSMPMPPLN…INAQGPEANH (71 aa). Residues 167–180 show a composition bias toward low complexity; that stretch reads PGSTSTPTSGGAPS.

Belongs to the U1 small nuclear ribonucleoprotein C family. In terms of assembly, U1 snRNP is composed of the 7 core Sm proteins B/B', D1, D2, D3, E, F and G that assemble in a heptameric protein ring on the Sm site of the small nuclear RNA to form the core snRNP, and at least 3 U1 snRNP-specific proteins U1-70K, U1-A and U1-C. U1-C interacts with U1 snRNA and the 5' splice-site region of the pre-mRNA.

It localises to the nucleus. Functionally, component of the spliceosomal U1 snRNP, which is essential for recognition of the pre-mRNA 5' splice-site and the subsequent assembly of the spliceosome. U1-C is directly involved in initial 5' splice-site recognition for both constitutive and regulated alternative splicing. The interaction with the 5' splice-site seems to precede base-pairing between the pre-mRNA and the U1 snRNA. Stimulates commitment or early (E) complex formation by stabilizing the base pairing of the 5' end of the U1 snRNA and the 5' splice-site region. The sequence is that of U1 small nuclear ribonucleoprotein C from Vitis vinifera (Grape).